Consider the following 911-residue polypeptide: Probable 2-oxoadipate dehydrogenase complex component E1 homolog (911 aa).

The protein belongs to the alpha-ketoglutarate dehydrogenase family. The cofactor is thiamine diphosphate.

The protein localises to the mitochondrion. It catalyses the reaction N(6)-[(R)-lipoyl]-L-lysyl-[protein] + 2-oxoadipate + H(+) = N(6)-[(R)-S(8)-glutaryldihydrolipoyl]-L-lysyl-[protein] + CO2. Functionally, 2-oxoadipate dehydrogenase (E1a) component of the 2-oxoadipate dehydrogenase complex (OADHC). Participates in the first step, rate limiting for the overall conversion of 2-oxoadipate (alpha-ketoadipate) to glutaryl-CoA and CO(2) catalyzed by the whole OADHC. Catalyzes the irreversible decarboxylation of 2-oxoadipate via the thiamine diphosphate (ThDP) cofactor and subsequent transfer of the decarboxylated acyl intermediate on an oxidized dihydrolipoyl group that is covalently amidated to the E2 enzyme (dihydrolipoyllysine-residue succinyltransferase or DLST). This chain is Probable 2-oxoadipate dehydrogenase complex component E1 homolog, found in Caenorhabditis elegans.